We begin with the raw amino-acid sequence, 342 residues long: MDETSIINENTDVFEKKITLIERNLQEITINDKEIIRKIIRKRNLKIYWGTAITGKPHIGYFLPILKIKDFVEAECEVTILFADIHGFLDNLKAPIELIENRYHYYEKIIKIMLMSVGCDINKIRFVKGSDYQKNSDYVFDLYKLCSYTTERDCKRAGSDVVKQRDNVLLSSLIYPNMQALDEEYLKVDAQFGGEDQRKIFMHAKTFLPKLGYKKRIHLMNPMMPGLNSDKMSSSDELSKIDLLDTEQQINKKINKCFCEEGNLQSGVLHVFEFVIFHYYTSISINKKSYTSIEDVKKDFEMKLIHPKDLKLACSNYINKMVTPIRNEMLKDIDMIKKAYNN.

Tyr-48 serves as a coordination point for L-tyrosine. The short motif at 53–61 (ITGKPHIGY) is the 'HIGH' region element. L-tyrosine is bound by residues Tyr-175, Gln-179, Asp-182, and Gln-197. A 'KMSKS' region motif is present at residues 231–235 (KMSSS).

This sequence belongs to the class-I aminoacyl-tRNA synthetase family. In terms of assembly, homodimer.

Its subcellular location is the cytoplasm. It carries out the reaction tRNA(Tyr) + L-tyrosine + ATP = L-tyrosyl-tRNA(Tyr) + AMP + diphosphate + H(+). The polypeptide is Probable tyrosine--tRNA ligase, cytoplasmic (Enterocytozoon bieneusi (strain H348) (Microsporidian parasite)).